We begin with the raw amino-acid sequence, 396 residues long: Adenylyltransferase and sulfurtransferase UBA4 (396 aa).

Residues Gly51, Asp72, 79–83 (SNLHR), Lys95, and 139–140 (DG) each bind ATP. Zn(2+)-binding residues include Cys180 and Cys183. The active-site Glycyl thioester intermediate; for adenylyltransferase activity is the Cys197. Positions 257 and 260 each coordinate Zn(2+). Residues 305 to 394 (VSTKHILLDV…WAKNVDEKFP (90 aa)) form the Rhodanese domain. Cys355 serves as the catalytic Cysteine persulfide intermediate; for sulfurtransferase activity.

It in the N-terminal section; belongs to the HesA/MoeB/ThiF family. UBA4 subfamily. Zn(2+) is required as a cofactor.

The protein localises to the cytoplasm. Its subcellular location is the cytosol. It participates in tRNA modification; 5-methoxycarbonylmethyl-2-thiouridine-tRNA biosynthesis. Functionally, plays a central role in 2-thiolation of mcm(5)S(2)U at tRNA wobble positions of cytosolic tRNA(Lys), tRNA(Glu) and tRNA(Gln). Acts by mediating the C-terminal thiocarboxylation of sulfur carrier URM1. Its N-terminus first activates URM1 as acyl-adenylate (-COAMP), then the persulfide sulfur on the catalytic cysteine is transferred to URM1 to form thiocarboxylation (-COSH) of its C-terminus. The reaction probably involves hydrogen sulfide that is generated from the persulfide intermediate and that acts as a nucleophile towards URM1. Subsequently, a transient disulfide bond is formed. Does not use thiosulfate as sulfur donor; NFS1 probably acting as a sulfur donor for thiocarboxylation reactions. Prior mcm(5) tRNA modification by the elongator complex is required for 2-thiolation. May also be involved in protein urmylation. This chain is Adenylyltransferase and sulfurtransferase UBA4, found in Yarrowia lipolytica (strain CLIB 122 / E 150) (Yeast).